The following is a 260-amino-acid chain: 3'-5' ssDNA/RNA exonuclease TatD (260 aa).

A divalent metal cation-binding residues include Glu91, His127, and His152.

The protein belongs to the metallo-dependent hydrolases superfamily. TatD-type hydrolase family. TatD subfamily. Monomer. Mg(2+) is required as a cofactor. Mn(2+) serves as cofactor.

It is found in the cytoplasm. In terms of biological role, 3'-5' exonuclease that prefers single-stranded DNA and RNA. May play a role in the H(2)O(2)-induced DNA damage repair. This is 3'-5' ssDNA/RNA exonuclease TatD from Escherichia coli (strain K12).